The chain runs to 27 residues: Peptide Cn29 (27 aa).

Intrachain disulfides connect Cys2/Cys23, Cys5/Cys18, and Cys12/Cys25.

As to expression, expressed by the venom gland.

Its subcellular location is the secreted. This chain is Peptide Cn29, found in Centruroides noxius (Mexican scorpion).